The following is a 480-amino-acid chain: UDP-glucose 6-dehydrogenase 3 (480 aa).

NAD(+) is bound by residues 8-13, aspartate 33, arginine 38, 86-90, 127-128, and glutamate 161; these read GAGYVG, VNTPT, and ST. Residues 157–161, 216–223, and 256–269 each bind substrate; these read EFLAE, KLAANAFL, and RIGP…VGFG. The active-site Nucleophile is cysteine 272. Residue 272–275 coordinates NAD(+); that stretch reads CFQK. A substrate-binding site is contributed by 334-335; that stretch reads FK. Arginine 342 contributes to the NAD(+) binding site. Arginine 447 contacts substrate.

It belongs to the UDP-glucose/GDP-mannose dehydrogenase family.

The enzyme catalyses UDP-alpha-D-glucose + 2 NAD(+) + H2O = UDP-alpha-D-glucuronate + 2 NADH + 3 H(+). It participates in nucleotide-sugar biosynthesis; UDP-alpha-D-glucuronate biosynthesis; UDP-alpha-D-glucuronate from UDP-alpha-D-glucose: step 1/1. With respect to regulation, inhibited by UDP-xylose. Its function is as follows. Involved in the biosynthesis of UDP-glucuronic acid (UDP-GlcA), providing nucleotide sugars for cell-wall polymers. Required for the formation of cell wall ingrowths on the outer cell walls of nematode-induced syncytia. The polypeptide is UDP-glucose 6-dehydrogenase 3 (UGD3) (Arabidopsis thaliana (Mouse-ear cress)).